We begin with the raw amino-acid sequence, 429 residues long: MFS-type efflux pump MSMEG_3705 (429 aa).

The next 12 helical transmembrane spans lie at 21–41, 59–79, 86–106, 115–137, 150–170, 181–201, 228–248, 264–284, 299–319, 327–347, 361–381, and 397–417; these read AWAA…DRFL, AIGV…GIAV, GAFG…TMLG, LALT…HAYV, LAVI…GGGL, FVIM…VVGV, FLIV…LTTF, VGVE…LIVG, LWIV…AFVV, LFLA…IAAI, AMFL…VGML, and ALLL…WLAS.

The protein belongs to the major facilitator superfamily.

The protein resides in the cell inner membrane. Probably plays a role in bacterial growth and resistance to antibiotics. The chain is MFS-type efflux pump MSMEG_3705 from Mycolicibacterium smegmatis (strain ATCC 700084 / mc(2)155) (Mycobacterium smegmatis).